A 333-amino-acid chain; its full sequence is DNA repair and recombination protein RadA (333 aa).

Position 127-134 (127-134 (GEFGSGKT)) interacts with ATP.

It belongs to the eukaryotic RecA-like protein family.

Involved in DNA repair and in homologous recombination. Binds and assemble on single-stranded DNA to form a nucleoprotein filament. Hydrolyzes ATP in a ssDNA-dependent manner and promotes DNA strand exchange between homologous DNA molecules. This Pyrobaculum arsenaticum (strain DSM 13514 / JCM 11321 / PZ6) protein is DNA repair and recombination protein RadA.